A 181-amino-acid polypeptide reads, in one-letter code: Ribosome maturation factor RimM (181 aa).

One can recognise a PRC barrel domain in the interval 98-177 (EGEFFYCDLI…KITTHNAKTL (80 aa)).

Belongs to the RimM family. In terms of assembly, binds ribosomal protein uS19.

It is found in the cytoplasm. Its function is as follows. An accessory protein needed during the final step in the assembly of 30S ribosomal subunit, possibly for assembly of the head region. Essential for efficient processing of 16S rRNA. May be needed both before and after RbfA during the maturation of 16S rRNA. It has affinity for free ribosomal 30S subunits but not for 70S ribosomes. In Helicobacter pylori (strain J99 / ATCC 700824) (Campylobacter pylori J99), this protein is Ribosome maturation factor RimM.